A 101-amino-acid polypeptide reads, in one-letter code: Small ribosomal subunit protein uS14 (101 aa).

This sequence belongs to the universal ribosomal protein uS14 family. In terms of assembly, part of the 30S ribosomal subunit. Contacts proteins S3 and S10.

In terms of biological role, binds 16S rRNA, required for the assembly of 30S particles and may also be responsible for determining the conformation of the 16S rRNA at the A site. This is Small ribosomal subunit protein uS14 from Nitrosomonas europaea (strain ATCC 19718 / CIP 103999 / KCTC 2705 / NBRC 14298).